The primary structure comprises 102 residues: Glutaredoxin-C14 (102 aa).

The Glutaredoxin domain occupies 1 to 101; it reads MDKVMRMSSE…PLIKPYQSFH (101 aa). A disulfide bridge links Cys-21 with Cys-24.

This sequence belongs to the glutaredoxin family. CC-type subfamily.

It localises to the cytoplasm. In terms of biological role, has a glutathione-disulfide oxidoreductase activity in the presence of NADPH and glutathione reductase. Reduces low molecular weight disulfides and proteins. The sequence is that of Glutaredoxin-C14 (GRXC14) from Arabidopsis thaliana (Mouse-ear cress).